Consider the following 113-residue polypeptide: Hydrogenase maturation factor HypA (113 aa).

Position 2 (His2) interacts with Ni(2+). Positions 73, 76, 89, and 92 each coordinate Zn(2+).

The protein belongs to the HypA/HybF family.

Its function is as follows. Involved in the maturation of [NiFe] hydrogenases. Required for nickel insertion into the metal center of the hydrogenase. This Rhodopseudomonas palustris (strain BisB5) protein is Hydrogenase maturation factor HypA.